The following is a 393-amino-acid chain: LL-diaminopimelate aminotransferase (393 aa).

2 residues coordinate substrate: Y14 and G41. Residues Y71, 104-105 (AK), Y128, N174, Y205, and 233-235 (SFS) contribute to the pyridoxal 5'-phosphate site. Residues K105, Y128, and N174 each contribute to the substrate site. Residue K236 is modified to N6-(pyridoxal phosphate)lysine. 2 residues coordinate pyridoxal 5'-phosphate: R244 and N275. N275 and R369 together coordinate substrate.

The protein belongs to the class-I pyridoxal-phosphate-dependent aminotransferase family. LL-diaminopimelate aminotransferase subfamily. In terms of assembly, homodimer. Pyridoxal 5'-phosphate serves as cofactor.

It catalyses the reaction (2S,6S)-2,6-diaminopimelate + 2-oxoglutarate = (S)-2,3,4,5-tetrahydrodipicolinate + L-glutamate + H2O + H(+). It functions in the pathway amino-acid biosynthesis; L-lysine biosynthesis via DAP pathway; LL-2,6-diaminopimelate from (S)-tetrahydrodipicolinate (aminotransferase route): step 1/1. Functionally, involved in the synthesis of meso-diaminopimelate (m-DAP or DL-DAP), required for both lysine and peptidoglycan biosynthesis. Catalyzes the direct conversion of tetrahydrodipicolinate to LL-diaminopimelate. The polypeptide is LL-diaminopimelate aminotransferase (Chlamydia muridarum (strain MoPn / Nigg)).